We begin with the raw amino-acid sequence, 394 residues long: Tetracycline resistance protein, class D (394 aa).

Transmembrane regions (helical) follow at residues 6–26 (VIAL…MPVL), 42–62 (HYGI…PLLG), 73–93 (VLLL…LSNV), 94–114 (LWML…GAVA), 135–155 (GAAF…AGDI), 159–179 (LPFV…FFIF), 198–218 (GISF…FFTA), 243–263 (AVGF…AVVA), 274–294 (TIIF…SAIT), 296–316 (GWMV…LPAL), 335–355 (VLVS…AFIF), and 364–384 (GTVW…CLLI).

Belongs to the major facilitator superfamily. TCR/Tet family.

Its subcellular location is the cell inner membrane. Resistance to tetracycline by an active tetracycline efflux. This is an energy-dependent process that decreases the accumulation of the antibiotic in whole cells. This protein functions as a metal-tetracycline/H(+) antiporter. This Salmonella ordonez protein is Tetracycline resistance protein, class D (tetA).